Reading from the N-terminus, the 675-residue chain is MFKKLFGQMQRIGKALMLPVAILPAAGLLLAIGTAFQGEALQHYLPFIKNDIVQQIANMLTGAGGIIFDNLPIIFALGVAIGLAGGDGVAAIAAFVGFIILNKTMGAFLHVTPDKLSDPTNGYANVLGIPTLQTGVFGGIIIGALAAWCYNKFYNITLPSYLGFFAGKRFVPIMMATTSFILAFPMAIIWPTIQNGLNAFSEGLLDSNTGLAVFLFGFIKRLLIPFGLHHIFHAPFWFEFGSWKNAAGEIIRGDQRIFIEQIREGAHLTSGKFMQGEFPVMMFGLPAAALAIYQTAKPENKKVVAGLMISAALTSFLTGITEPLEFSFLFVAPFLFVIHAVLDGLSFLTLYLLNVHLGYTFSGGFIDYVLLGILPNKTAWWLVIPVGIIYAVIYYFVFRFLIVKFNYKTPGREDKKSSVTTTSASQLPFDVLKAMGGKENIKHLDACITRLRVEVNEKSKVDVAGLKSLGASGVLEVGNNMQAIFGPKSDQIKHDMAKIISGEITKPSETTIDEEVSDDPVHVEDIVETEIYAPGHGEIIPLSEVPDKVFSEKMMGDGIGFVPDSGEIVAPFDGTVKTIFPTKHAIGLESDSGVEVLIHIGIDTVKLNGEGFESLVNTDEPVTQGQPLMKIDLEYLKEHAPSIITPVIITNQEDKTLTIEDVKQVDPGKAIMTIK.

The 412-residue stretch at 3–414 (KKLFGQMQRI…FNYKTPGRED (412 aa)) folds into the PTS EIIC type-1 domain. 11 consecutive transmembrane segments (helical) span residues 16–36 (LMLP…GTAF), 59–79 (MLTG…ALGV), 81–101 (IGLA…FIIL), 126–146 (VLGI…GALA), 170–190 (FVPI…AIIW), 211–231 (LAVF…LHHI), 273–293 (FMQG…LAIY), 303–323 (VVAG…ITEP), 328–348 (FLFV…LSFL), 355–375 (VHLG…GILP), and 378–398 (TAWW…YFVF). In terms of domain architecture, PTS EIIB type-1 spans 425–506 (SQLPFDVLKA…AKIISGEITK (82 aa)). Cys447 (phosphocysteine intermediate; for EIIB activity) is an active-site residue. A PTS EIIA type-1 domain is found at 547–651 (DKVFSEKMMG…SIITPVIITN (105 aa)). His599 serves as the catalytic Tele-phosphohistidine intermediate; for EIIA activity.

It localises to the cell membrane. It carries out the reaction N(pros)-phospho-L-histidyl-[protein] + D-glucose(out) = D-glucose 6-phosphate(in) + L-histidyl-[protein]. Functionally, the phosphoenolpyruvate-dependent sugar phosphotransferase system (sugar PTS), a major carbohydrate active transport system, catalyzes the phosphorylation of incoming sugar substrates concomitantly with their translocation across the cell membrane. This system is involved in glucose transport. This chain is PTS system glucose-specific EIICBA component (ptsG), found in Staphylococcus epidermidis.